The following is a 501-amino-acid chain: ATP synthase subunit alpha (501 aa).

Residue 169-176 (GDRQTGKT) coordinates ATP.

Belongs to the ATPase alpha/beta chains family. As to quaternary structure, F-type ATPases have 2 components, CF(1) - the catalytic core - and CF(0) - the membrane proton channel. CF(1) has five subunits: alpha(3), beta(3), gamma(1), delta(1), epsilon(1). CF(0) has three main subunits: a(1), b(2) and c(9-12). The alpha and beta chains form an alternating ring which encloses part of the gamma chain. CF(1) is attached to CF(0) by a central stalk formed by the gamma and epsilon chains, while a peripheral stalk is formed by the delta and b chains.

It is found in the cell membrane. It catalyses the reaction ATP + H2O + 4 H(+)(in) = ADP + phosphate + 5 H(+)(out). Its function is as follows. Produces ATP from ADP in the presence of a proton gradient across the membrane. The alpha chain is a regulatory subunit. This is ATP synthase subunit alpha from Streptococcus agalactiae serotype Ia (strain ATCC 27591 / A909 / CDC SS700).